The chain runs to 398 residues: 1-deoxy-D-xylulose 5-phosphate reductoisomerase (398 aa).

NADPH-binding residues include T11, G12, S13, I14, and N125. K126 contacts 1-deoxy-D-xylulose 5-phosphate. Position 127 (E127) interacts with NADPH. Residue D151 coordinates Mn(2+). Residues S152, E153, S186, and H209 each contribute to the 1-deoxy-D-xylulose 5-phosphate site. E153 is a Mn(2+) binding site. An NADPH-binding site is contributed by G215. Residues S222, N227, K228, and E231 each contribute to the 1-deoxy-D-xylulose 5-phosphate site. A Mn(2+)-binding site is contributed by E231.

This sequence belongs to the DXR family. Requires Mg(2+) as cofactor. Mn(2+) is required as a cofactor.

It catalyses the reaction 2-C-methyl-D-erythritol 4-phosphate + NADP(+) = 1-deoxy-D-xylulose 5-phosphate + NADPH + H(+). It participates in isoprenoid biosynthesis; isopentenyl diphosphate biosynthesis via DXP pathway; isopentenyl diphosphate from 1-deoxy-D-xylulose 5-phosphate: step 1/6. Functionally, catalyzes the NADPH-dependent rearrangement and reduction of 1-deoxy-D-xylulose-5-phosphate (DXP) to 2-C-methyl-D-erythritol 4-phosphate (MEP). The protein is 1-deoxy-D-xylulose 5-phosphate reductoisomerase of Acinetobacter baumannii (strain ACICU).